The following is a 188-amino-acid chain: MRVMGVDPGLTRCGLSVVESGRGRTVVALDVDVVRTPSDAPLAERLLSISDAVEHWLATHQPDVVAIERVFSQLNVTTVMGTAQAGGVVALAAAKRGIGVHFHTPSEVKAAVTGNGAANKAQVTAMVTRILALQAKPTPADAADALALAICHCWRAPMIARMARAEALAAQQRQKYKDKVDATLRAAR.

Active-site residues include D7, E68, and D141. Mg(2+) is bound by residues D7, E68, and D141.

It belongs to the RuvC family. As to quaternary structure, homodimer which binds Holliday junction (HJ) DNA. The HJ becomes 2-fold symmetrical on binding to RuvC with unstacked arms; it has a different conformation from HJ DNA in complex with RuvA. In the full resolvosome a probable DNA-RuvA(4)-RuvB(12)-RuvC(2) complex forms which resolves the HJ. Requires Mg(2+) as cofactor.

The protein resides in the cytoplasm. It carries out the reaction Endonucleolytic cleavage at a junction such as a reciprocal single-stranded crossover between two homologous DNA duplexes (Holliday junction).. Functionally, the RuvA-RuvB-RuvC complex processes Holliday junction (HJ) DNA during genetic recombination and DNA repair. Endonuclease that resolves HJ intermediates. Cleaves cruciform DNA by making single-stranded nicks across the HJ at symmetrical positions within the homologous arms, yielding a 5'-phosphate and a 3'-hydroxyl group; requires a central core of homology in the junction. The consensus cleavage sequence is 5'-(A/T)TT(C/G)-3'. Cleavage occurs on the 3'-side of the TT dinucleotide at the point of strand exchange. HJ branch migration catalyzed by RuvA-RuvB allows RuvC to scan DNA until it finds its consensus sequence, where it cleaves and resolves the cruciform DNA. This is Crossover junction endodeoxyribonuclease RuvC from Mycobacterium avium (strain 104).